The sequence spans 682 residues: DNA-directed RNA polymerase subunit beta' (682 aa).

Positions 69, 71, 87, and 90 each coordinate Zn(2+). Asp-489, Asp-491, and Asp-493 together coordinate Mg(2+).

It belongs to the RNA polymerase beta' chain family. RpoC1 subfamily. In terms of assembly, in plastids the minimal PEP RNA polymerase catalytic core is composed of four subunits: alpha, beta, beta', and beta''. When a (nuclear-encoded) sigma factor is associated with the core the holoenzyme is formed, which can initiate transcription. Mg(2+) serves as cofactor. The cofactor is Zn(2+).

The protein resides in the plastid. It is found in the chloroplast. It catalyses the reaction RNA(n) + a ribonucleoside 5'-triphosphate = RNA(n+1) + diphosphate. Its function is as follows. DNA-dependent RNA polymerase catalyzes the transcription of DNA into RNA using the four ribonucleoside triphosphates as substrates. The sequence is that of DNA-directed RNA polymerase subunit beta' from Vitis vinifera (Grape).